The sequence spans 655 residues: Endoplasmic reticulum chaperone BiP (655 aa).

The first 19 residues, Met-1–Ala-19, serve as a signal peptide directing secretion. The segment at Met-1–Ala-81 is required for interaction with ELAPOR1. Gly-37–Tyr-40 provides a ligand contact to ATP. Ser-87 bears the Phosphoserine mark. Lys-97 contacts ATP. Lys-126 bears the N6-acetyllysine mark. Residues Lys-126–Lys-281 are nucleotide-binding (NBD). Tyr-161 bears the 3'-nitrotyrosine mark. Lys-214 is subject to N6-acetyllysine. An ATP-binding site is contributed by Gly-228–Thr-230. Lys-272 carries the post-translational modification N6-acetyllysine. Glu-294–Ser-301 is an ATP binding site. At Lys-327 the chain carries N6-acetyllysine. Residue Lys-353 forms a Glycyl lysine isopeptide (Lys-Gly) (interchain with G-Cter in SUMO2) linkage. Residue Lys-354 is modified to N6-acetyllysine; alternate. A Glycyl lysine isopeptide (Lys-Gly) (interchain with G-Cter in SUMO1); alternate cross-link involves residue Lys-354. Gly-365–Arg-368 provides a ligand contact to ATP. An interdomain linker region spans residues Gln-410–Val-420. The segment at Cys-421–Thr-501 is substrate-binding (SBD). Lys-448 is subject to N6-succinyllysine. Arg-493 carries the post-translational modification Omega-N-methylarginine. Thr-519 bears the O-AMP-threonine; alternate mark. Phosphothreonine; alternate is present on Thr-519. Lys-586 carries the N6,N6,N6-trimethyllysine; by METTL21A; in vitro modification. Lys-586 bears the N6,N6-dimethyllysine; alternate mark. Residue Lys-586 is modified to N6-methyllysine; alternate. Lys-592 carries the N6-methyllysine modification. The interval Ile-632–Leu-655 is disordered. 2 positions are modified to phosphothreonine: Thr-644 and Thr-649. Acidic residues predominate over residues Gly-645–Leu-655. Ser-650 is subject to Phosphoserine. A Prevents secretion from ER motif is present at residues Lys-652–Leu-655.

Belongs to the heat shock protein 70 family. Monomer and homooligomer; homooligomerization via the interdomain linker inactivates the chaperone activity and acts as a storage of HSPA5/BiP molecules. Interacts with DNAJC1 (via J domain). Component of an EIF2 complex at least composed of CELF1/CUGBP1, CALR, CALR3, EIF2S1, EIF2S2, HSP90B1 and HSPA5. Part of a large chaperone multiprotein complex comprising DNAJB11, HSP90B1, HSPA5, HYOU, PDIA2, PDIA4, PDIA6, PPIB, SDF2L1, UGGT1 and very small amounts of ERP29, but not, or at very low levels, CALR nor CANX. Interacts with TMEM132A and TRIM21. May form a complex with ERLEC1, OS9, SEL1L and SYVN1. Interacts with DNAJC10. Interacts with DNAJB9/ERdj4; leading to recruit HSPA5/BiP to ERN1/IRE1. Interacts with ERN1/IRE1 (via luminal domain); the interaction takes place following interaction with DNAJB9/ERdj4 and leads to inactivate ERN1/IRE1, the interaction also competitively inhibits ERN1 interaction with MANF. Interacts directly with MANF (via SAP domain); the interaction inhibits ATP binding to HSPA5/BiP and subsequent nucleotide exchange. Interacts with ERN1 (via luminal domain); the interaction competitively inhibits ERN1 interaction with MANF. Interacts with EIF2AK3/PERK (via luminal domain); interaction leads to inactivate EIF2AK3/PERK. Interacts with MX1. Interacts with METTL23. Interacts with CEMIP; the interaction induces calcium leakage from the endoplasmic reticulum and cell migration. Interacts with PCSK4 form; the interaction takes place in the endoplasmic reticulum. Interacts with CIPC. Interacts with CCDC88B (via C-terminus); the interaction opposes ERN1-mediated JNK activation, protecting against apoptosis. Interacts with INPP5K; necessary for INPP5K localization at the endoplasmic reticulum. Interacts with MANF; the interaction is direct. Interacts with LOXL2; leading to activate the ERN1/IRE1-XBP1 pathway of the unfolded protein response. Interacts with CLU under stressed condition; interaction increases CLU protein stability; facilitates its retrotranslocation and redistribution to the mitochondria; cooperatively suppress stress-induced apoptosis by stabilizing mitochondrial membrane integrity. Interacts with CCDC47. Interacts with CLN3. Interacts with ELAPOR1; may regulate the function of HSPA5 in apoptosis and cell proliferation. Interacts with CASP7. Interacts with ILDR2; the interaction stabilizes ILDR2 expression. Interacts with ADAM7. In unstressed cells, AMPylation at Thr-519 by FICD inactivates the chaperome activity: AMPylated form is locked in a relatively inert state and only weakly stimulated by J domain-containing proteins. In response to endoplasmic reticulum stress, de-AMPylation by the same protein, FICD, restores the chaperone activity. In terms of tissue distribution, expressed in sperm (at protein level).

It localises to the endoplasmic reticulum lumen. Its subcellular location is the melanosome. The protein localises to the cytoplasm. It is found in the cell surface. The enzyme catalyses ATP + H2O = ADP + phosphate + H(+). With respect to regulation, the chaperone activity is regulated by ATP-induced allosteric coupling of the nucleotide-binding (NBD) and substrate-binding (SBD) domains. In the ADP-bound and nucleotide-free (apo) states, the two domains have little interaction. In contrast, in the ATP-bound state the two domains are tightly coupled, which results in drastically accelerated kinetics in both binding and release of polypeptide substrates. J domain-containing co-chaperones (DNAJB9/ERdj4 or DNAJC10/ERdj5) stimulate the ATPase activity and are required for efficient substrate recognition by HSPA5/BiP. Homooligomerization inactivates participating HSPA5/BiP protomers and probably act as reservoirs to store HSPA5/BiP molecules when they are not needed by the cell. Endoplasmic reticulum chaperone that plays a key role in protein folding and quality control in the endoplasmic reticulum lumen. Involved in the correct folding of proteins and degradation of misfolded proteins via its interaction with DNAJC10/ERdj5, probably to facilitate the release of DNAJC10/ERdj5 from its substrate. Acts as a key repressor of the EIF2AK3/PERK and ERN1/IRE1-mediated unfolded protein response (UPR). In the unstressed endoplasmic reticulum, recruited by DNAJB9/ERdj4 to the luminal region of ERN1/IRE1, leading to disrupt the dimerization of ERN1/IRE1, thereby inactivating ERN1/IRE1. Also binds and inactivates EIF2AK3/PERK in unstressed cells. Accumulation of misfolded protein in the endoplasmic reticulum causes release of HSPA5/BiP from ERN1/IRE1 and EIF2AK3/PERK, allowing their homodimerization and subsequent activation. Plays an auxiliary role in post-translational transport of small presecretory proteins across endoplasmic reticulum (ER). May function as an allosteric modulator for SEC61 channel-forming translocon complex, likely cooperating with SEC62 to enable the productive insertion of these precursors into SEC61 channel. Appears to specifically regulate translocation of precursors having inhibitory residues in their mature region that weaken channel gating. May also play a role in apoptosis and cell proliferation. This Mus musculus (Mouse) protein is Endoplasmic reticulum chaperone BiP.